The sequence spans 640 residues: CREB3 regulatory factor (640 aa).

Residues 308–414 (SPGLVATAES…FSEPGYENDS (107 aa)) form a disordered region. Low complexity predominate over residues 317–329 (SGSLSASTSVSDS). Residues 356-371 (EDDEDDEDEFDDEDHD) are compositionally biased toward acidic residues. Over residues 372–381 (EGFGSEHELS) the composition is skewed to basic and acidic residues. Acidic residues predominate over residues 382–402 (ENEEEEEEEEDYEDDRDDDIS). A bZIP domain is found at 522-585 (TARPRSRKEK…VNRVQNPREE (64 aa)). The tract at residues 524-533 (RPRSRKEKNK) is basic motif. The tract at residues 534–541 (LASRACRL) is leucine-zipper.

Belongs to the bZIP family. CREBRF subfamily. As to quaternary structure, interacts (via leucine-zipper domain) with CREB3 (via leucine-zipper domain); the interaction promotes CREB3 degradation. Post-translationally, probably degraded by the proteasome. As to expression, highly expressed in intestin, testis, heart and kidney, weakly in brain adipose, colon, liver, lung and skeletal.

The protein localises to the nucleus. Its function is as follows. Acts as a negative regulator of the endoplasmic reticulum stress response or unfolded protein response (UPR). Represses the transcriptional activity of CREB3 during the UPR. Recruits CREB3 into nuclear foci. This chain is CREB3 regulatory factor (Crebrf), found in Mus musculus (Mouse).